The following is a 445-amino-acid chain: Glycine betaine monooxygenase oxygenase subunit (445 aa).

Residues 73-180 enclose the Rieske domain; the sequence is WLFVGMTCEI…VTHAGGFLFV (108 aa). Cysteine 115, histidine 117, cysteine 135, and histidine 138 together coordinate [2Fe-2S] cluster. Residues histidine 234 and histidine 239 each coordinate Fe cation.

It belongs to the bacterial ring-hydroxylating dioxygenase alpha subunit family. Homotrimer. The system is composed of an oxygenase subunit (BmoA) and a reductase subunit (BmoB). Maximal specific activity is obtained when the ratio of BmoA to BmoB is 5:1. [2Fe-2S] cluster serves as cofactor. Fe cation is required as a cofactor.

It carries out the reaction glycine betaine + NADH + O2 + H(+) = N,N-dimethylglycine + formaldehyde + NAD(+) + H2O. With respect to regulation, activity is absolutely dependent on the presence of BmoB. Glycine betaine monooxygenase activity is significantly enhanced by Fe(2+) and severely inhibited by heavy-metal ions, including Co(2+), Mn(2+), Zn(2+), Cu(2+) and Ag(+). Severely inhibited by EDTA. Functionally, involved in degradation of glycine betaine. Part of a Rieske-type oxygenase system that catalyzes the conversion of glycine betaine (GB) to dimethylglycine (DMG). This subunit is the terminal oxygenase component of the system. Is specific for GB, and does not show any activity on choline, L-carnitine, stachydrine, dimethylglycine or sarcosine. Activity is strictly dependent on NADH. This Chromohalobacter salexigens (strain ATCC BAA-138 / DSM 3043 / CIP 106854 / NCIMB 13768 / 1H11) protein is Glycine betaine monooxygenase oxygenase subunit.